The sequence spans 225 residues: MASAATAGLTLLSGGASIAADIASIVTEQQRLALQKEQIRNNYELGKQSLSLQQQAMENSRDRIRLSAAQIKELGLDPKSELNMLMGLTAGAQPPISTPISSEQLFLNSSNLARSVRWDARNFGEAINTFAGLRAKHQANPNRPDMMLGSDNPNWGARATGDALSVSGLSVRSNHFGSGPSSLGSLSSVRSNPFSSISSGSVGGISLRTVGSRPSIRSVFSTTSV.

As to quaternary structure, homooligomer. The portal-like structure consists in 12 copies of VP2. Interacts with capsid protein VP1.

Its subcellular location is the virion. It localises to the host cytoplasm. Minor structural protein that forms a portal-like structure at a unique three-fold axis of symmetry, following binding to the host receptor. The channel formed by VP2 may allow the delivery of the viral genome through the host endosomal membrane. The chain is Minor capsid protein VP2 from Bovine enteric calicivirus Newbury agent-1 (isolate Bovine/UK/Newbury1/1976) (BEC).